Here is a 208-residue protein sequence, read N- to C-terminus: DNA-binding protein HupB (208 aa).

A bacterial histone-like domain region spans residues 1-90; sequence MNKAELIDVL…PGAQFKAVIS (90 aa). Lysine 3 carries the post-translational modification N6-acetyllysine. Lysine 3 carries the N6-acetyllysine; alternate; partial modification. Lysine 3 is modified (N6-methyllysine; alternate; partial). Lysine 72 is modified (N6-acetyllysine; partial). N6-methyllysine; partial is present on lysine 86. The segment at 92-208 is C-terminus, required for nucleoid localization; it reads AQKLPADGPA…KKAPAKKGRR (117 aa). N6-acetyllysine; alternate; partial occurs at positions 94 and 103. Residues lysine 94 and lysine 103 each carry the N6-methyllysine; alternate; partial modification. The tract at residues 96–208 is disordered; the sequence is PADGPAVKRG…KKAPAKKGRR (113 aa). Residues 101–205 are degenerate repeats region; sequence AVKRGVTAGP…AAAKKAPAKK (105 aa). Residues 113–208 show a composition bias toward basic residues; that stretch reads KAAKKAPAKK…KKAPAKKGRR (96 aa). Lysine 116, lysine 136, lysine 149, and lysine 168 each carry N6-acetyllysine.

It belongs to the bacterial histone-like protein family. Long actinobacterial subfamily. May form oligomers. Interacts with RNase E (rne). In terms of processing, in addition to the identifed modifications, is also methylated on one of Arg-53; Arg-54 or Arg-55.

The protein localises to the cytoplasm. It is found in the nucleoid. The protein resides in the secreted. Its subcellular location is the cell wall. The enzyme catalyses 4 Fe(2+) + O2 + 4 H(+) = 4 Fe(3+) + 2 H2O. With respect to regulation, trans-stilbene derivative 4,4'-[(E)-ethene-1,2 diylbis({5[(phenylcarbonyl)amino]benzene-2,1-diyl}sulfonylimino)] dibenzoic acid (SD1) inhibits DNA binding at 50 uM. SD1 does not inhibit growth in a range of 3-1600 uM. In terms of biological role, a nucleoid-associated protein (NAP) that plays a crucial role in local chromosome architecture. Helps organize newly replicated oriC proximal regions and contributes to the timing of replication initiation and coordinating replication with chromosome segregation. There are between 30,000-60,000 molecules in a log phase cell; the protein-DNA complex is dynamic during the cell cycle, with more complexes near the cell ends. Binds irregularly along the chromosome with higher binding near the origin of replication (oriC) and lowest binding near the chromosome terminus (ter). Binds DNA non-sequence specifically via both its N- and C-terminal domains with high affinity, has no preference for linear or supercoiled DNA. Binds four-way junction DNA. Represses T7 RNA polymerase in vitro. The C-terminal domain enhances DNA end-joining in vitro in the presence of T4 DNA ligase. RNase E and HupB jointly contribute to cellular adaptation to changing growth conditions and survival during antibiotic treatment. Has ferroxidase activity, converts Fe(2+) into Fe(3+). Binds Fe(3+) but not Fe(2+); prevents the generation of hydroxyl radicals by the Fenton reaction and thus protects DNA from damage. May function in iron storage. Its function is as follows. Plays a role in epigenetic resistance to antibiotics. Growth on levels of isoniazid (INH) near the minimal inhibitory concentration (MIC) kills most bacteria. The surviving cells grow as either large or small colony variants (SCV), evidence suggest SCVs are associated with persistent infections. Mutating this protein leads to specific loss of SCVs. Functionally, may play a role in cell wall assembly. The sequence is that of DNA-binding protein HupB from Mycolicibacterium smegmatis (strain ATCC 700084 / mc(2)155) (Mycobacterium smegmatis).